Consider the following 480-residue polypeptide: Sensor histidine kinase CusS (480 aa).

The Cytoplasmic portion of the chain corresponds to 1–15 (MVSKPFQRPFSLATR). Residues 16-36 (LTFFISLATIAAFFAFAWIMI) traverse the membrane as a helical segment. Over 37–186 (HSVKVHFAEQ…LHYINDLMNK (150 aa)) the chain is Periplasmic. The helical transmembrane segment at 187–207 (LIMTASVISILIVFIVLLAVH) threads the bilayer. Residues 207 to 260 (HKGHAPIRSVSRQIQNITSKDLDVRLDPQTVPIELEQLVLSFNHMIERIEDVFT) form the HAMP domain. The Cytoplasmic segment spans residues 208–480 (KGHAPIRSVS…GTRFVIILPA (273 aa)). Residues 268-480 (DIAHEIRTPI…GTRFVIILPA (213 aa)) form the Histidine kinase domain. The residue at position 271 (H271) is a Phosphohistidine; by autocatalysis.

In terms of processing, autophosphorylated.

The protein resides in the cell inner membrane. It carries out the reaction ATP + protein L-histidine = ADP + protein N-phospho-L-histidine.. In terms of biological role, member of the two-component regulatory system CusS/CusR involved in response to copper and silver. Acts as a copper/silver ion sensor. Activates CusR by phosphorylation. In Escherichia coli O6:H1 (strain CFT073 / ATCC 700928 / UPEC), this protein is Sensor histidine kinase CusS (cusS).